We begin with the raw amino-acid sequence, 194 residues long: Phosphoheptose isomerase (194 aa).

Residues 37–194 enclose the SIS domain; the sequence is IANSFKQGGK…LIEFEMAKTA (158 aa). 52-54 serves as a coordination point for substrate; sequence NGG. Zn(2+)-binding residues include H61 and E65. Substrate-binding positions include E65, 93–94, 119–121, S124, and Q172; these read ND and STS. Residues Q172 and H180 each contribute to the Zn(2+) site.

It belongs to the SIS family. GmhA subfamily. Homotetramer. The cofactor is Zn(2+).

It localises to the cytoplasm. It catalyses the reaction 2 D-sedoheptulose 7-phosphate = D-glycero-alpha-D-manno-heptose 7-phosphate + D-glycero-beta-D-manno-heptose 7-phosphate. It functions in the pathway carbohydrate biosynthesis; D-glycero-D-manno-heptose 7-phosphate biosynthesis; D-glycero-alpha-D-manno-heptose 7-phosphate and D-glycero-beta-D-manno-heptose 7-phosphate from sedoheptulose 7-phosphate: step 1/1. It participates in bacterial outer membrane biogenesis; LOS core biosynthesis. In terms of biological role, catalyzes the isomerization of sedoheptulose 7-phosphate in D-glycero-D-manno-heptose 7-phosphate. The polypeptide is Phosphoheptose isomerase (Haemophilus ducreyi (strain 35000HP / ATCC 700724)).